Reading from the N-terminus, the 669-residue chain is MYSTVFYTSVHPSTSVLSRKQLPLLISKDFSAELYHSLPCRSLENGHINKVKGVKVKATIAEAPVTPTEKTDSGANGDLKVPQKKLKVLVAGGGIGGLVFALAAKKRGFDVLVFERDLSAIRGEGQYRGPIQIQSNALAALEAIDLDVAEDIMNAGCITGQRINGLVDGISGNWYCKFDTFTPAVERGLPVTRVISRMTLQQILARAVGEEIIMNESNVVDFEDDGEKVTVVLENGQRFTGDLLVGADGIRSKVRTNLFGPSEATYSGYTCYTGIADFVPADIDTVGYRVFLGHKQYFVSSDVGGGKMQWYAFYNEPAGGADAPNGKKERLLKIFGGWCDNVIDLLVATDEDAILRRDIYDRPPTFSWGRGRVTLLGDSVHAMQPNLGQGGCMAIEDSYQLALELEKACSRSAEFGSPVDIISSLRSYESARKLRVGVIHGLARMAAIMASTYKAYLGVGLGPLSFLTQYRIPHPGRVGGRVFIDLGMPLMLSWVLGGNGDKLEGRIKHCRLSEKANDQLRKWFEDDDALERATDAEWLLLPAGNGSSGLEAIVLSRDEDVPCTVGSISHTNIPGKSIVLPLPQVSEMHARISCKDGAFFVTDLRSEHGTWVTDNEGRRYRTSPNFPTRFHPSDVIEFGSDKAAFRVKAMKFPLKTSERKEEREAVEAA.

The transit peptide at 1-49 (MYSTVFYTSVHPSTSVLSRKQLPLLISKDFSAELYHSLPCRSLENGHIN) directs the protein to the chloroplast. FAD-binding positions include 87–115 (KVLV…LVFE) and 365–378 (TFSW…LLGD). The region spanning 553–617 (IVLSRDEDVP…HGTWVTDNEG (65 aa)) is the FHA domain.

The cofactor is FAD.

It localises to the plastid. It is found in the chloroplast. The enzyme catalyses all-trans-zeaxanthin + 4 reduced [2Fe-2S]-[ferredoxin] + 2 O2 + 4 H(+) = all-trans-violaxanthin + 4 oxidized [2Fe-2S]-[ferredoxin] + 2 H2O. Its pathway is plant hormone biosynthesis; abscisate biosynthesis. Its function is as follows. Converts zeaxanthin into antheraxanthin and subsequently violaxanthin. Involved in the epoxidation of zeaxanthin. Plays an important role in resistance to stresses, seed development and dormancy. The polypeptide is Zeaxanthin epoxidase, chloroplastic (Solanum lycopersicum (Tomato)).